The following is a 122-amino-acid chain: MAASVDLELKKAFTELQAKVIDTQQKVKLADIQIEQLNRTKKHAHLTDTEIMTLVDETNMYEGVGRMFILQSKEVIHNQLLEKQKIAKEKIKELEQKKSYLERSVKEAEDNIREMLMARRAQ.

A2 carries the N-acetylalanine modification.

The protein belongs to the prefoldin subunit beta family. Heterohexamer of two PFD-alpha type and four PFD-beta type subunits.

In terms of biological role, binds specifically to cytosolic chaperonin (c-CPN) and transfers target proteins to it. Binds to nascent polypeptide chain and promotes folding in an environment in which there are many competing pathways for nonnative proteins. In Mus musculus (Mouse), this protein is Prefoldin subunit 1 (Pfdn1).